We begin with the raw amino-acid sequence, 280 residues long: Acetyl-coenzyme A carboxylase carboxyl transferase subunit beta (280 aa).

Residues 28-280 (LFLACPYCGA…IVRLHTAEAE (253 aa)) enclose the CoA carboxyltransferase N-terminal domain. 4 residues coordinate Zn(2+): Cys32, Cys35, Cys50, and Cys53. The C4-type zinc-finger motif lies at 32–53 (CPYCGAQMYNKQLGKYRVCAKC).

This sequence belongs to the AccD/PCCB family. As to quaternary structure, acetyl-CoA carboxylase is a heterohexamer composed of biotin carboxyl carrier protein (AccB), biotin carboxylase (AccC) and two subunits each of ACCase subunit alpha (AccA) and ACCase subunit beta (AccD). The cofactor is Zn(2+).

The protein localises to the cytoplasm. It catalyses the reaction N(6)-carboxybiotinyl-L-lysyl-[protein] + acetyl-CoA = N(6)-biotinyl-L-lysyl-[protein] + malonyl-CoA. It functions in the pathway lipid metabolism; malonyl-CoA biosynthesis; malonyl-CoA from acetyl-CoA: step 1/1. Functionally, component of the acetyl coenzyme A carboxylase (ACC) complex. Biotin carboxylase (BC) catalyzes the carboxylation of biotin on its carrier protein (BCCP) and then the CO(2) group is transferred by the transcarboxylase to acetyl-CoA to form malonyl-CoA. In Leuconostoc mesenteroides subsp. mesenteroides (strain ATCC 8293 / DSM 20343 / BCRC 11652 / CCM 1803 / JCM 6124 / NCDO 523 / NBRC 100496 / NCIMB 8023 / NCTC 12954 / NRRL B-1118 / 37Y), this protein is Acetyl-coenzyme A carboxylase carboxyl transferase subunit beta.